The primary structure comprises 305 residues: Probable 5-dehydro-4-deoxyglucarate dehydratase (305 aa).

Belongs to the DapA family.

The enzyme catalyses 5-dehydro-4-deoxy-D-glucarate + H(+) = 2,5-dioxopentanoate + CO2 + H2O. It participates in carbohydrate acid metabolism; D-glucarate degradation; 2,5-dioxopentanoate from D-glucarate: step 2/2. The chain is Probable 5-dehydro-4-deoxyglucarate dehydratase from Xanthomonas campestris pv. campestris (strain 8004).